A 54-amino-acid polypeptide reads, in one-letter code: uncharacterized protein (54 aa).

Residues 1 to 13 (MLLCFHMCQRIMW) form the signal peptide.

The protein resides in the secreted. This is an uncharacterized protein from Saccharomyces cerevisiae (strain ATCC 204508 / S288c) (Baker's yeast).